A 239-amino-acid polypeptide reads, in one-letter code: Ribonuclease PH (239 aa).

Phosphate contacts are provided by residues arginine 87 and 125 to 127 (GTR).

Belongs to the RNase PH family. Homohexameric ring arranged as a trimer of dimers.

It carries out the reaction tRNA(n+1) + phosphate = tRNA(n) + a ribonucleoside 5'-diphosphate. In terms of biological role, phosphorolytic 3'-5' exoribonuclease that plays an important role in tRNA 3'-end maturation. Removes nucleotide residues following the 3'-CCA terminus of tRNAs; can also add nucleotides to the ends of RNA molecules by using nucleoside diphosphates as substrates, but this may not be physiologically important. Probably plays a role in initiation of 16S rRNA degradation (leading to ribosome degradation) during starvation. This Pseudomonas paraeruginosa (strain DSM 24068 / PA7) (Pseudomonas aeruginosa (strain PA7)) protein is Ribonuclease PH.